Reading from the N-terminus, the 337-residue chain is 1-aminocyclopropane-1-carboxylate deaminase (337 aa).

Residue K50 is modified to N6-(pyridoxal phosphate)lysine. The Nucleophile role is filled by S77.

Belongs to the ACC deaminase/D-cysteine desulfhydrase family. Homotrimer. The cofactor is pyridoxal 5'-phosphate.

The enzyme catalyses 1-aminocyclopropane-1-carboxylate + H2O = 2-oxobutanoate + NH4(+). Its function is as follows. Catalyzes a cyclopropane ring-opening reaction, the irreversible conversion of 1-aminocyclopropane-1-carboxylate (ACC) to ammonia and alpha-ketobutyrate. Allows growth on ACC as a nitrogen source. The protein is 1-aminocyclopropane-1-carboxylate deaminase of Bradyrhizobium diazoefficiens (strain JCM 10833 / BCRC 13528 / IAM 13628 / NBRC 14792 / USDA 110).